The sequence spans 507 residues: Inositol-3-phosphate synthase (507 aa).

NAD(+) contacts are provided by glycine 70, glycine 71, asparagine 72, asparagine 73, aspartate 143, isoleucine 180, glutamine 190, arginine 193, threonine 230, alanine 231, asparagine 232, threonine 233, glycine 281, serine 282, aspartate 306, serine 309, asparagine 340, asparagine 341, aspartate 342, lysine 355, alanine 391, aspartate 419, and serine 420.

The protein belongs to the myo-inositol 1-phosphate synthase family. Requires NAD(+) as cofactor.

The protein resides in the cytoplasm. It localises to the cytosol. Its subcellular location is the nucleus. The enzyme catalyses D-glucose 6-phosphate = 1D-myo-inositol 3-phosphate. It functions in the pathway polyol metabolism; myo-inositol biosynthesis; myo-inositol from D-glucose 6-phosphate: step 1/2. Functionally, key enzyme in myo-inositol biosynthesis pathway that catalyzes the conversion of glucose 6-phosphate to 1-myo-inositol 1-phosphate in a NAD-dependent manner. In Citrus paradisi (Grapefruit), this protein is Inositol-3-phosphate synthase.